We begin with the raw amino-acid sequence, 480 residues long: Initiation-specific alpha-1,6-mannosyltransferase (480 aa).

At 1–15 (MSRKLSHLIATRKSK) the chain is on the cytoplasmic side. The chain crosses the membrane as a helical; Signal-anchor for type II membrane protein span at residues 16-30 (TIVVTVLLIYSLLTF). The Lumenal portion of the chain corresponds to 31–480 (HLSNKRLLSQ…EDADKNAGHK (450 aa)). A DXD motif motif is present at residues 187–189 (DMD). 4 N-linked (GlcNAc...) asparagine glycosylation sites follow: Asn203, Asn281, Asn341, and Asn393.

The protein belongs to the glycosyltransferase 32 family. Mn(2+) serves as cofactor. Post-translationally, glycosylated.

The protein localises to the endoplasmic reticulum membrane. It is found in the golgi apparatus membrane. The enzyme catalyses Transfers an alpha-D-mannosyl residue from GDP-mannose into lipid-linked oligosaccharide, forming an alpha-(1-&gt;6)-D-mannosyl-D-mannose linkage.. In terms of biological role, mannosyltransferase involved in outer chain elongation of asparagine-linked oligosaccharides of the type Man(9)GlcNAc(2). Adds the first alpha-1,6-mannose to the Man(8)GlcNAc(2) and Man(9)GlcNAc(2), but not Man(5)GlcNAc(2), endoplasmic reticulum intermediates. Represents the first enzymatic event required for synthesis of outer chain mannose linkages on yeast secretory proteins. Also has the potential to transfer a second alpha-1,6-mannose to the Man(8)GlcNAc(2) core oligosaccharide. The protein is Initiation-specific alpha-1,6-mannosyltransferase of Saccharomyces cerevisiae (strain ATCC 204508 / S288c) (Baker's yeast).